Here is a 510-residue protein sequence, read N- to C-terminus: Hydroperoxide bicyclase CYP5164A3, mitochondrial (510 aa).

A mitochondrion-targeting transit peptide spans M1–R31. C452 contacts heme.

This sequence belongs to the cytochrome P450 family. It depends on heme as a cofactor.

It is found in the mitochondrion. It catalyses the reaction (13S)-hydroperoxy-(9Z,11E,15Z)-octadecatrienoate = plasmodiophorol A. The catalysed reaction is (13S)-hydroperoxy-(9Z,11E,15Z)-octadecatrienoate = plasmodiophorol B. The enzyme catalyses (13S)-hydroperoxy-(9Z,11E,15Z)-octadecatrienoate = ectocarpin A + H2O. It carries out the reaction (15S)-hydroperoxy-(5Z,8Z,11Z,13E,17Z)-eicosapentaenoate = ectocarpin B + H2O. It catalyses the reaction (15S)-hydroperoxy-(5Z,8Z,11Z,13E,17Z)-eicosapentaenoate = ectocarpin C. The catalysed reaction is (15S)-hydroperoxy-(5Z,8Z,11Z,13E,17Z)-eicosapentaenoate + H2O = ectocarpin D. The enzyme catalyses (15S)-hydroperoxy-(5Z,8Z,11Z,13E,17Z)-eicosapentaenoate = 14-oxo-15-hydroxy-(5Z,8Z,11Z,17Z)-eicosatetraenoate. Its pathway is lipid metabolism; oxylipin biosynthesis. Its function is as follows. Cytochrome P450 hydroperoxide bicyclase involved in the metabolism of oxylipins 'ectocarpins' natural products, such as hybridalactone, ecklonilactones and derivatives. Isomerizes the hydroperoxides into epoxyalcohols via epoxyallylic radical. Can use alpha-linolenic acid 13(S)-hydroperoxide (13-HPOTE) and eicosapentaenoic acid 15(S)-hydroperoxide (15-HPEPE) as preferred substrate to produce corresponding heterobicyclic oxylipins, such as plasmodiophorol A (6-oxabicyclo[3.1.0]hexane), plasmodiophorol B (2-oxabicyclo[2.2.1]heptane) and plasmodiophorol C (4-hydroxymethyl-1,2-dihydroxycyclopentane) as well as ectocarpin A (3-propenyl-6-oxabicyclo[3.1.0]hexane) formed at about 15:3:3:1 ratio for 13-HPOTE, and analogous to plasmodiophorols A and B including ectocarpin B (3-[(1'E)-propenyl]-6-oxabicyclo[3.1.0]hexane), ectocarpin C, 14-oxo-15-hydroxy-5,8,11,17-eicosate-traenoic acid and ectocarpin D for 15-HPEPE. Barely able to use linoleic acid 13-hydroperoxide (13-HPODE), linoleic acid 9-hydroperoxide (9-HPODE), eicosapentaenoic acid 15-hydroperoxide (15-HPEPE), and alpha-linolenic acid 9-hydroperoxide (9-HPOTE) as substrates. In Ectocarpus siliculosus (Brown alga), this protein is Hydroperoxide bicyclase CYP5164A3, mitochondrial.